A 349-amino-acid chain; its full sequence is Flap endonuclease 1 (349 aa).

The N-domain stretch occupies residues 1–102; that stretch reads MGVTELGKLI…AEIEARRRVK (102 aa). Asp31, Asp84, Glu156, Glu158, Asp177, Asp179, and Asp239 together coordinate Mg(2+). The tract at residues 120-261 is I-domain; sequence DVAKYMKRVI…KALKLVLEFG (142 aa).

It belongs to the XPG/RAD2 endonuclease family. FEN1 subfamily. In terms of assembly, interacts with PCNA. PCNA stimulates the nuclease activity without altering cleavage specificity. The cofactor is Mg(2+).

Functionally, structure-specific nuclease with 5'-flap endonuclease and 5'-3' exonuclease activities involved in DNA replication and repair. During DNA replication, cleaves the 5'-overhanging flap structure that is generated by displacement synthesis when DNA polymerase encounters the 5'-end of a downstream Okazaki fragment. Binds the unpaired 3'-DNA end and kinks the DNA to facilitate 5' cleavage specificity. Cleaves one nucleotide into the double-stranded DNA from the junction in flap DNA, leaving a nick for ligation. Also involved in the base excision repair (BER) pathway. Acts as a genome stabilization factor that prevents flaps from equilibrating into structures that lead to duplications and deletions. Also possesses 5'-3' exonuclease activity on nicked or gapped double-stranded DNA. This Pyrobaculum neutrophilum (strain DSM 2338 / JCM 9278 / NBRC 100436 / V24Sta) (Thermoproteus neutrophilus) protein is Flap endonuclease 1.